We begin with the raw amino-acid sequence, 523 residues long: 2-isopropylmalate synthase (523 aa).

A Pyruvate carboxyltransferase domain is found at 5–267 (VIIFDTTLRD…HTAINHQEIW (263 aa)). Mn(2+)-binding residues include Asp-14, His-202, His-204, and Asn-238. The segment at 392–523 (RLDYFSVQSG…QHNENNKETV (132 aa)) is regulatory domain.

This sequence belongs to the alpha-IPM synthase/homocitrate synthase family. LeuA type 1 subfamily. Homodimer. The cofactor is Mn(2+).

It is found in the cytoplasm. It carries out the reaction 3-methyl-2-oxobutanoate + acetyl-CoA + H2O = (2S)-2-isopropylmalate + CoA + H(+). It functions in the pathway amino-acid biosynthesis; L-leucine biosynthesis; L-leucine from 3-methyl-2-oxobutanoate: step 1/4. Its function is as follows. Catalyzes the condensation of the acetyl group of acetyl-CoA with 3-methyl-2-oxobutanoate (2-ketoisovalerate) to form 3-carboxy-3-hydroxy-4-methylpentanoate (2-isopropylmalate). The sequence is that of 2-isopropylmalate synthase from Escherichia coli (strain K12 / MC4100 / BW2952).